Consider the following 120-residue polypeptide: MRCSLQFLGVLMFWISGVSGDIVITQDELSNPVTSGESVSISCRSSKSLLYKDGKTYLNWFLQRPGQSPQLLIYLMSTRASGVSDRFSGSGSGTDFTLEISRVKAEDVGVYYCQQLVEYP.

The N-terminal stretch at 1–20 is a signal peptide; it reads MRCSLQFLGVLMFWISGVSG. The framework-1 stretch occupies residues 21-43; it reads DIVITQDELSNPVTSGESVSISC. C43 and C113 are oxidised to a cystine. The tract at residues 44–59 is complementarity-determining-1; it reads RSSKSLLYKDGKTYLN. Residues 60–74 are framework-2; that stretch reads WFLQRPGQSPQLLIY. A complementarity-determining-2 region spans residues 75 to 81; it reads LMSTRAS. The tract at residues 82-113 is framework-3; it reads GVSDRFSGSGSGTDFTLEISRVKAEDVGVYYC. A complementarity-determining-3 region spans residues 114–120; that stretch reads QQLVEYP.

This is Immunoglobulin kappa variable 2-112 from Mus musculus (Mouse).